Here is a 203-residue protein sequence, read N- to C-terminus: LexA repressor (203 aa).

Residues 28–47 (IREIGDEFGITAKGAYDHLK) constitute a DNA-binding region (H-T-H motif). Residues S127 and K164 each act as for autocatalytic cleavage activity in the active site.

Belongs to the peptidase S24 family. As to quaternary structure, homodimer.

The catalysed reaction is Hydrolysis of Ala-|-Gly bond in repressor LexA.. Functionally, represses a number of genes involved in the response to DNA damage (SOS response), including recA and lexA. In the presence of single-stranded DNA, RecA interacts with LexA causing an autocatalytic cleavage which disrupts the DNA-binding part of LexA, leading to derepression of the SOS regulon and eventually DNA repair. The polypeptide is LexA repressor (Leptospira borgpetersenii serovar Hardjo-bovis (strain JB197)).